A 521-amino-acid polypeptide reads, in one-letter code: Leucine-rich repeat-containing protein 24 (521 aa).

The N-terminal stretch at 1–23 (MALRAPTLLLLLLGLLLLPLLPG) is a signal peptide. The LRRNT domain maps to 24 to 58 (LPPRATGCPAACRCYSATVECGALRLRVVPPGIPP). LRR repeat units follow at residues 59–80 (GTQT…SLAP), 83–104 (ALRH…AFRA), 107–128 (RLLE…AFVG), 131–152 (QLRV…TFLH), 155–176 (RLQE…ALAG), and 179–200 (SLAL…ALQP). Asn-91 carries N-linked (GlcNAc...) asparagine glycosylation. One can recognise an LRRCT domain in the interval 212-267 (NPWRCDCALHWLGSWIKEGGRRLLSSRDKKITCAEPPRLALQSLLEVSGGSLICIP). One can recognise an Ig-like C2-type domain in the interval 268–371 (PSVNVEPPEF…ARVPFHLLVN (104 aa)). A disulfide bridge connects residues Cys-289 and Cys-353. The tract at residues 306–330 (QPRDGKPQAQAQLEGGAPGLGGHGT) is disordered. Asn-342 and Asn-371 each carry an N-linked (GlcNAc...) asparagine glycan. The disordered stretch occupies residues 374–395 (RQQSQQLPDPQAPATRPVGHEP). A helical transmembrane segment spans residues 414–434 (AITAAIALLALTALLLAAMIC).

The protein localises to the membrane. The polypeptide is Leucine-rich repeat-containing protein 24 (Lrrc24) (Mus musculus (Mouse)).